The chain runs to 218 residues: Protease PrsW (218 aa).

A helical transmembrane segment spans residues 1-23 (MFAIISAGIAPGIALLSYFYLKD). Topologically, residues 24–30 (QYDNEPV) are cytoplasmic. The chain crosses the membrane as a helical span at residues 31–53 (HMVLRSFFLGVVLVFPIMFIQYV). Topologically, residues 54-98 (LEKENVGGGSFFVSFLSSGFLEESLKWFILMISVYPHAHFDEHYD) are extracellular. The chain crosses the membrane as a helical span at residues 99-121 (GIVYGASVSLGFATLENILYLIG). Over 122-129 (HGVEHAFV) the chain is Cytoplasmic. Residues 130–151 (RALLPVSCHALIGVIMGFYLGK) traverse the membrane as a helical segment. At 152–180 (ARFSADKARVKWLTLSLVVPSLLHGSYDF) the chain is on the extracellular side. Residues 181–203 (ILTALSNWIYYMLPFMVFLWWFG) traverse the membrane as a helical segment. Over 204–218 (LRKAKKARSVNMMQV) the chain is Cytoplasmic.

The protein belongs to the protease PrsW family.

It localises to the cell membrane. In terms of biological role, involved in the degradation of anti-sigma-W factor RsiW. Responsible for Site-1 cleavage of the RsiW anti-sigma factor. This results, after two other proteolytic steps catalyzed by the RasP and ClpXP proteases, in the release of SigW and the transcription activation of the genes under the control of the sigma-W factor. Seems to be responsible for sensing antimicrobial peptides that damage the cell membrane and other agents that cause cell envelope stress. Therefore it is a protease governing regulated intramembrane proteolysis and resistance to antimicrobial peptides in B.subtilis. The polypeptide is Protease PrsW (Bacillus subtilis (strain 168)).